The following is a 466-amino-acid chain: F-box only protein 15 (466 aa).

One can recognise an F-box domain in the interval 27 to 73 (SASLDSLPSEVLLKILSYLDAAALLCAGCVNRRFYHLANDNFIWIRI).

As to quaternary structure, directly interacts with SKP1 and CUL1.

Its function is as follows. Substrate-recognition component of the SCF (SKP1-CUL1-F-box protein)-type E3 ubiquitin ligase complex. The protein is F-box only protein 15 (FBXO15) of Bos taurus (Bovine).